Consider the following 128-residue polypeptide: Insulin-like growth factor 2 (128 aa).

Residues 1-24 form the signal peptide; that stretch reads MGISMGKSMLVLLTFLAFASCCIA. Residues 25–52 are b; that stretch reads AYRPSETLCGGELVDTLQFVCGDRGFYF. Disulfide bonds link Cys-33–Cys-71, Cys-45–Cys-84, and Cys-70–Cys-75. Residues 53 to 64 form a c region; sequence SRPASRVSRRSR. The interval 65 to 85 is a; that stretch reads GIVEECCFRSCDLALLETYCA. The segment at 86–91 is d; the sequence is TPAKSE. Positions 92–128 are cleaved as a propeptide — e peptide; that stretch reads RDVSASLAVLPDNFPRYPVGKFFQYDTWRQSTQRLRR.

It belongs to the insulin family. Interacts with MYORG; this interaction is required for IGF2 secretion. Interacts with integrins ITGAV:ITGB3 and ITGA6:ITGB4; integrin-binding is required for IGF2 signaling. Post-translationally, proteolytically processed by PCSK4, proIGF2 is cleaved at Arg-128 and Arg-92 to generate big-IGF2 and mature IGF2.

It localises to the secreted. Functionally, the insulin-like growth factors possess growth-promoting activity. Major fetal growth hormone in mammals. Plays a key role in regulating fetoplacental development. IGF2 is influenced by placental lactogen. Also involved in tissue differentiation. In adults, involved in glucose metabolism in adipose tissue, skeletal muscle and liver. Acts as a ligand for integrin which is required for IGF2 signaling. Positively regulates myogenic transcription factor MYOD1 function by facilitating the recruitment of transcriptional coactivators, thereby controlling muscle terminal differentiation. Inhibits myoblast differentiation and metabolism via increasing the mitochondrial respiration rate. Preptin undergoes glucose-mediated co-secretion with insulin, and acts as a physiological amplifier of glucose-mediated insulin secretion. Exhibits osteogenic properties by increasing osteoblast mitogenic activity through phosphoactivation of MAPK1 and MAPK3. This Cavia porcellus (Guinea pig) protein is Insulin-like growth factor 2.